The following is a 190-amino-acid chain: Pyridoxal 5'-phosphate synthase subunit PdxT (190 aa).

46–48 lines the L-glutamine pocket; sequence GES. Cys-78 acts as the Nucleophile in catalysis. L-glutamine contacts are provided by residues Arg-105 and 134–135; that span reads IR. Catalysis depends on charge relay system residues His-170 and Glu-172.

It belongs to the glutaminase PdxT/SNO family. In terms of assembly, in the presence of PdxS, forms a dodecamer of heterodimers. Only shows activity in the heterodimer.

It catalyses the reaction aldehydo-D-ribose 5-phosphate + D-glyceraldehyde 3-phosphate + L-glutamine = pyridoxal 5'-phosphate + L-glutamate + phosphate + 3 H2O + H(+). It carries out the reaction L-glutamine + H2O = L-glutamate + NH4(+). It participates in cofactor biosynthesis; pyridoxal 5'-phosphate biosynthesis. In terms of biological role, catalyzes the hydrolysis of glutamine to glutamate and ammonia as part of the biosynthesis of pyridoxal 5'-phosphate. The resulting ammonia molecule is channeled to the active site of PdxS. In Clostridium beijerinckii (strain ATCC 51743 / NCIMB 8052) (Clostridium acetobutylicum), this protein is Pyridoxal 5'-phosphate synthase subunit PdxT.